We begin with the raw amino-acid sequence, 217 residues long: Elongation factor Ts (217 aa).

Residues 82 to 85 (TDFV) are involved in Mg(2+) ion dislocation from EF-Tu.

Belongs to the EF-Ts family.

The protein localises to the cytoplasm. Associates with the EF-Tu.GDP complex and induces the exchange of GDP to GTP. It remains bound to the aminoacyl-tRNA.EF-Tu.GTP complex up to the GTP hydrolysis stage on the ribosome. This Prochlorococcus marinus (strain SARG / CCMP1375 / SS120) protein is Elongation factor Ts.